Reading from the N-terminus, the 445-residue chain is Tubulin beta chain (445 aa).

The GTP site is built by Gln-11, Glu-69, Ser-138, Gly-142, Thr-143, Gly-144, Asn-204, and Asn-226. Residue Glu-69 coordinates Mg(2+).

The protein belongs to the tubulin family. As to quaternary structure, dimer of alpha and beta chains. A typical microtubule is a hollow water-filled tube with an outer diameter of 25 nm and an inner diameter of 15 nM. Alpha-beta heterodimers associate head-to-tail to form protofilaments running lengthwise along the microtubule wall with the beta-tubulin subunit facing the microtubule plus end conferring a structural polarity. Microtubules usually have 13 protofilaments but different protofilament numbers can be found in some organisms and specialized cells. The cofactor is Mg(2+).

The protein localises to the cytoplasm. It is found in the cytoskeleton. In terms of biological role, tubulin is the major constituent of microtubules, a cylinder consisting of laterally associated linear protofilaments composed of alpha- and beta-tubulin heterodimers. Microtubules grow by the addition of GTP-tubulin dimers to the microtubule end, where a stabilizing cap forms. Below the cap, tubulin dimers are in GDP-bound state, owing to GTPase activity of alpha-tubulin. This chain is Tubulin beta chain, found in Coprinopsis cinerea (strain Okayama-7 / 130 / ATCC MYA-4618 / FGSC 9003) (Inky cap fungus).